The primary structure comprises 288 residues: Diaminopimelate epimerase (288 aa).

Substrate-binding residues include Asn14 and Asn67. Catalysis depends on Cys76, which acts as the Proton donor. Substrate-binding positions include 77–78 (GN), Asn166, Asn199, and 217–218 (ER). Cys226 (proton acceptor) is an active-site residue. 227–228 (GT) provides a ligand contact to substrate.

Belongs to the diaminopimelate epimerase family. As to quaternary structure, homodimer.

The protein resides in the cytoplasm. It catalyses the reaction (2S,6S)-2,6-diaminopimelate = meso-2,6-diaminopimelate. It participates in amino-acid biosynthesis; L-lysine biosynthesis via DAP pathway; DL-2,6-diaminopimelate from LL-2,6-diaminopimelate: step 1/1. In terms of biological role, catalyzes the stereoinversion of LL-2,6-diaminopimelate (L,L-DAP) to meso-diaminopimelate (meso-DAP), a precursor of L-lysine and an essential component of the bacterial peptidoglycan. The chain is Diaminopimelate epimerase from Bacillus anthracis (strain A0248).